A 213-amino-acid chain; its full sequence is Orotate phosphoribosyltransferase (213 aa).

Residue lysine 26 participates in 5-phospho-alpha-D-ribose 1-diphosphate binding. Orotate is bound at residue 34-35 (FF). 5-phospho-alpha-D-ribose 1-diphosphate is bound by residues 72–73 (YK), arginine 99, lysine 100, lysine 103, histidine 105, and 124–132 (DDVITAGTA). Orotate is bound by residues threonine 128 and arginine 156.

This sequence belongs to the purine/pyrimidine phosphoribosyltransferase family. PyrE subfamily. Homodimer. Requires Mg(2+) as cofactor.

It catalyses the reaction orotidine 5'-phosphate + diphosphate = orotate + 5-phospho-alpha-D-ribose 1-diphosphate. The protein operates within pyrimidine metabolism; UMP biosynthesis via de novo pathway; UMP from orotate: step 1/2. In terms of biological role, catalyzes the transfer of a ribosyl phosphate group from 5-phosphoribose 1-diphosphate to orotate, leading to the formation of orotidine monophosphate (OMP). The polypeptide is Orotate phosphoribosyltransferase (Vibrio atlanticus (strain LGP32) (Vibrio splendidus (strain Mel32))).